A 728-amino-acid chain; its full sequence is Dynamin-like protein 1 (728 aa).

The segment at 1–119 (MKELFQKIWQ…ILQEKVQSID (119 aa)) is assembly domain, required for tetramerization. Positions 159 to 442 (QNLEFNIAIT…LYAGEKSKIA (284 aa)) constitute a Dynamin-type G domain. The tract at residues 169 to 176 (GVMNAGKS) is G1 motif. 171–177 (MNAGKSS) is a binding site for GDP. Positions 195-196 (ET) are G2 motif. The interval 298-301 (DTPG) is G3 motif. Positions 358-361 (TKAD) are G4 motif. Lys-359 contacts GDP. Residue Glu-388 is a region of interest, G5 motif. Residue 400-402 (SAK) participates in GDP binding. The segment at 470 to 695 (ENKQGVSEEN…LESLEKVLQS (226 aa)) is required for liposome binding but not for tetramerization.

The protein belongs to the TRAFAC class dynamin-like GTPase superfamily. Dynamin/Fzo/YdjA family. As to quaternary structure, forms a 2:2 heterotetramer with DLP1. DLP2 forms a central back-to-back dimer flanked on each side by a DLP1 subunit. In the crystal structures the 2 DLP1 subunits are in very different conformations.

Its subcellular location is the cytoplasm. The protein localises to the cytosol. The catalysed reaction is GTP + H2O = GDP + phosphate + H(+). Functionally, the heterotetrameric DLP1(2)-DLP2(2) complex tethers liposomes and may mediate their fusion. Initial binding is probably mediated by DLP1, while DLP2 couples DLP1 subunits and increases the effective reach of the complex up to 45 nm. The role of the nucleotide is unknown. This subunit alone weakly binds to liposomes; GTP, GDP, GMPPCP and GMPPNP do not change heterotetramer binding. Tetramerization is required for GTPase activity, suggesting the GTPase domains (dynamin-type G) from DLP1 and DLP2 must dimerize to reconstitute the GTPase active site. The chain is Dynamin-like protein 1 from Campylobacter jejuni subsp. jejuni serotype O:23/36 (strain 81-176).